Consider the following 681-residue polypeptide: Fibulin-1 (681 aa).

Positions 1–17 (MDLYMIVLLSLCGLLRA) are cleaved as a signal peptide. Cystine bridges form between Cys29–Cys55, Cys30–Cys62, Cys43–Cys63, Cys72–Cys103, Cys85–Cys104, Cys106–Cys125, Cys107–Cys138, Cys114–Cys139, Cys162–Cys171, Cys167–Cys176, Cys178–Cys191, Cys197–Cys210, Cys204–Cys219, Cys225–Cys237, Cys243–Cys256, Cys250–Cys265, Cys271–Cys283, Cys289–Cys301, Cys317–Cys330, Cys336–Cys348, Cys343–Cys357, Cys359–Cys372, Cys378–Cys390, Cys386–Cys399, Cys401–Cys414, Cys420–Cys429, Cys440–Cys454, Cys460–Cys473, Cys469–Cys482, Cys484–Cys498, Cys504–Cys517, Cys511–Cys526, and Cys531–Cys553. Anaphylatoxin-like domains follow at residues 29-63 (CCEDGKKRGLESQDCSSLPLISESTTCRVVQEQCC), 68-107 (EDSICTSGINMAKDQSSCDALLSGSSTCETKTTKMCCECC), and 108-139 (LLGSSRCRIRVSPVSSVCRWSISRGPGVRSCC). Residues 158-192 (TEDQCRAAGCAQRCLNGTCSCLDGFKLKTDGKHCE) form the EGF-like 1 domain. An N-linked (GlcNAc...) asparagine glycan is attached at Asn173. Positions 193–238 (DINECLLGPHHCVTGERCINTLGSYRCQREISCGTGYELTDNNKCK) constitute an EGF-like 2; calcium-binding domain. In terms of domain architecture, EGF-like 3; calcium-binding spans 239–284 (DIDECDLGTHNCAAEMECQNTAGSFRCRPRMQCAAGFIQDALGSCI). In terms of domain architecture, EGF-like 4; calcium-binding spans 285–331 (DINECVSVTALSRGQMCFNTVGSFICQRHSVTCGRGYHLNAEGTRCV). Residues 332–373 (DIDECAGPDNSCDGHGCINLVGSYRCECRTGFIFNSISRSCE) enclose the EGF-like 5; calcium-binding domain. Residues 374 to 415 (DIDECRNYPGRLCAHKCENILGSYKCSCTAGFKLADDGRNCD) form the EGF-like 6; calcium-binding domain. The region spanning 416–455 (DVNECESSPCSQGCANVYGSYQSYCRRGYQLSDADGITCE) is the EGF-like 7; calcium-binding domain. The EGF-like 8; calcium-binding domain maps to 456–499 (DIDECALPTGGHICSYRCHNTPGSFHCTCPASGYTLAANGRSCQ). The EGF-like 9; calcium-binding domain maps to 500–554 (DIDECLTGTHSCSESESCFNIQGGFRCLSFDCPANYRRSGDTRPRVDRADIIRCV).

It belongs to the fibulin family. In terms of assembly, homomultimerizes and interacts with various extracellular matrix components such as FN1, LAMA1, NID, AGC1 and CSPG2.

The protein resides in the secreted. It is found in the extracellular space. Its subcellular location is the extracellular matrix. Incorporated into fibronectin-containing matrix fibers. May play a role in cell adhesion and migration along protein fibers within the extracellular matrix (ECM). Could be important for certain developmental processes and contribute to the supramolecular organization of ECM architecture, in particular to those of basement membranes. The protein is Fibulin-1 (fbln1) of Danio rerio (Zebrafish).